A 50-amino-acid chain; its full sequence is Defensin D1 (50 aa).

Cystine bridges form between cysteine 3–cysteine 50, cysteine 14–cysteine 35, cysteine 20–cysteine 44, and cysteine 24–cysteine 46.

Post-translationally, contains 4 disulfide bonds.

Its subcellular location is the secreted. Its function is as follows. Antimicrobial peptide active against fungi, Gram-positive and Gram-negative bacteria. Inhibits growth of hyphae in the fungi A.niger (IC(50)=3.5 ug/ml), B.sorokiniana (IC(50)=3.0 ug/ml), F.oxysporum (IC(50)=9.5 ug/ml), F.graminearum (IC(50)=6.9 ug/ml), F.culmorum (IC(50)=6.9 ug/ml) and B.cinerea (IC(50)=27.4 ug/ml). Has no effect on spore germination. Destroys spores in germinated conidia by disruption of cell walls and membranes in A.niger and B.sorokiniana. Causes vacuolization of germinated macro- and microconidia in F.oxysporum, F.graminearum and F.culmorum. Strongly inhibits growth of P.infestans on potato tubers above concentrations of 13.6 ug/ml. Inhibits growth of Gram-positive bacteria C.michiganensis and B.subtilis and of Gram-negative bacteria P.syringae, E.carotovora and E.coli. This is Defensin D1 from Nigella sativa (Black cumin).